The sequence spans 248 residues: MSEALLVKVGGSLRGAEALLDELAAYPGPLVLVHGGGPEIGAWLGRLGYESRFVGGLRVTPPEQLEVVEMALYLTGKRLAEGLSRRGRKALALSGRDALCLKGRALPELGRVGEVVEVEVGLLQDLLAKGYTPLLAPIALDAEGPLNVNADTAAGAVAGALGWPAVFLTDVEGVYRDPKDPRTRFPRLTPKEVEALKGEGVIQGGMIPKVEAALSALRAGAPWAAIAKGERGVLEAVLRGEAGTRFTL.

Substrate-binding positions include 36–37 (GG), arginine 58, and asparagine 147.

This sequence belongs to the acetylglutamate kinase family. ArgB subfamily.

It is found in the cytoplasm. It carries out the reaction N-acetyl-L-glutamate + ATP = N-acetyl-L-glutamyl 5-phosphate + ADP. Its pathway is amino-acid biosynthesis; L-arginine biosynthesis; N(2)-acetyl-L-ornithine from L-glutamate: step 2/4. Its function is as follows. Catalyzes the ATP-dependent phosphorylation of N-acetyl-L-glutamate. The polypeptide is Acetylglutamate kinase (Thermus thermophilus (strain ATCC BAA-163 / DSM 7039 / HB27)).